A 98-amino-acid chain; its full sequence is Small ribosomal subunit protein eS24 (98 aa).

The protein belongs to the eukaryotic ribosomal protein eS24 family.

This Thermoplasma acidophilum (strain ATCC 25905 / DSM 1728 / JCM 9062 / NBRC 15155 / AMRC-C165) protein is Small ribosomal subunit protein eS24 (rps2e).